The sequence spans 391 residues: Na(+)/H(+) antiporter NhaA 2 (391 aa).

11 helical membrane-spanning segments follow: residues 25 to 45 (AGGIVLMAAALAALIVANSPL), 56 to 76 (VWLGLSVELWINDGLMAIFFL), 98 to 118 (ALPGFAALGGMLVPALIYIAI), 128 to 148 (GWAIPAATDIAFALGVLSLLG), 157 to 177 (VFLAALAILDDLGAVTIIAFF), 180 to 200 (SGLNLPMLAAAFVTLAVLVAL), 208 to 228 (LLPYLLLGALLWFFVLQSGVH), 264 to 284 (VAFAVVPIFGFANAGVSLSGI), 297 to 317 (VALGLFVGKQIGVFLAAVLAI), 335 to 355 (GVAILCGIGFTMSLFIGNLAF), and 364 to 384 (EVKVGVLIGSGLAAVAGIVLL).

Belongs to the NhaA Na(+)/H(+) (TC 2.A.33) antiporter family.

It localises to the cell inner membrane. The catalysed reaction is Na(+)(in) + 2 H(+)(out) = Na(+)(out) + 2 H(+)(in). Na(+)/H(+) antiporter that extrudes sodium in exchange for external protons. The polypeptide is Na(+)/H(+) antiporter NhaA 2 (Pseudomonas syringae pv. tomato (strain ATCC BAA-871 / DC3000)).